Here is a 157-residue protein sequence, read N- to C-terminus: MISQATIFMLVLLVIALLAKNQSLLIAVLVLLVIKFIGVGDKVFPFFQQKGISLGVTIITIAVLTPIATGEIGFKQMGEAIRSSYAWVALLSGVVVALIAASGIDLLKNDPHITTALVLGTILAVAVFNGVAVGPLIGAGIAYLTMKVVQWLGSFWG.

4 helical membrane passes run 1-21 (MISQATIFMLVLLVIALLAKN), 54-74 (LGVTIITIAVLTPIATGEIGF), 87-107 (WVALLSGVVVALIAASGIDLL), and 117-137 (LVLGTILAVAVFNGVAVGPLI).

It belongs to the UPF0756 family.

The protein localises to the cell membrane. This chain is UPF0756 membrane protein BH3161, found in Halalkalibacterium halodurans (strain ATCC BAA-125 / DSM 18197 / FERM 7344 / JCM 9153 / C-125) (Bacillus halodurans).